Here is a 266-residue protein sequence, read N- to C-terminus: Urease accessory protein UreD (266 aa).

Belongs to the UreD family. UreD, UreF and UreG form a complex that acts as a GTP-hydrolysis-dependent molecular chaperone, activating the urease apoprotein by helping to assemble the nickel containing metallocenter of UreC. The UreE protein probably delivers the nickel.

The protein resides in the cytoplasm. In terms of biological role, required for maturation of urease via the functional incorporation of the urease nickel metallocenter. The protein is Urease accessory protein UreD of Jannaschia sp. (strain CCS1).